The following is a 322-amino-acid chain: Retinal homeobox protein Rx-A (322 aa).

Positions 32–39 match the Octapeptide motif motif; it reads HSIEAILG. Over residues 75 to 87 the composition is skewed to basic and acidic residues; the sequence is TEEIHPQQEHLED. Residues 75 to 136 are disordered; sequence TEEIHPQQEH…KKKHRRNRTT (62 aa). The span at 100-117 shows a compositional bias: polar residues; the sequence is KTSSECLSPGLSTSNSDN. Positions 130–189 form a DNA-binding region, homeobox; that stretch reads HRRNRTTFTTYQLHELERAFEKSHYPDVYSREELAMKVNLPEVRVQVWFQNRRAKWRRQE. An OAR motif is present at residues 302–315; it reads NSIASLRMKAKEHI. The Nuclear localization signal motif lies at 308–312; that stretch reads RMKAK.

The protein belongs to the paired homeobox family. Bicoid subfamily. In terms of tissue distribution, highly expressed in anterior neural plate followed by neural retina, pigmented epithelium, in pineal gland, diencephalon floor and epiphysis. At later stages, the neuroretina remains the primary site of expression. No expression in the developing lens and cornea.

It localises to the nucleus. In terms of biological role, plays a critical role in eye formation by regulating the initial specification of retinal cells and/or their subsequent proliferation. The protein is Retinal homeobox protein Rx-A (rax-a) of Xenopus laevis (African clawed frog).